We begin with the raw amino-acid sequence, 303 residues long: Beta-carotene 3-hydroxylase 2, chloroplastic (303 aa).

A chloroplast-targeting transit peptide spans 1-52 (MAAGLSTIAVTLKPLNRSSFSANHPISTAVFPPSLRFNGFRRRKILTVCFVV). The next 2 helical transmembrane spans lie at 96 to 116 (YLIA…MAVY) and 130 to 150 (VLEM…MEFW). Residues 143-270 (AAVGMEFWAR…KFKGVPYGLF (128 aa)) enclose the Fatty acid hydroxylase domain. The Histidine box-1 signature appears at 155–160 (HRALWH). The Histidine box-2 signature appears at 165 to 171 (NMHESHH). 2 helical membrane passes run 180–200 (LNDV…YYGF) and 206–226 (VPGL…AYMF). The short motif at 228–233 (HDGLVH) is the Histidine box-3 element. A Histidine box-4 motif is present at residues 254–258 (HQLHH).

It belongs to the sterol desaturase family. As to quaternary structure, homodimer. In terms of tissue distribution, expressed in leaves, flowers, stems, roots and siliques.

Its subcellular location is the plastid. It is found in the chloroplast membrane. It catalyses the reaction all-trans-beta-carotene + 4 reduced [2Fe-2S]-[ferredoxin] + 2 O2 + 4 H(+) = all-trans-zeaxanthin + 4 oxidized [2Fe-2S]-[ferredoxin] + 2 H2O. Nonheme diiron monooxygenase involved in the biosynthesis of xanthophylls. Specific for beta-ring hydroxylations of beta-carotene. Also has a low activity toward the beta- and epsilon-rings of alpha-carotene. No activity with acyclic carotenoids such as lycopene and neurosporene. Uses ferredoxin as an electron donor. This chain is Beta-carotene 3-hydroxylase 2, chloroplastic (BETA-OHASE 2), found in Arabidopsis thaliana (Mouse-ear cress).